The primary structure comprises 202 residues: NADH-quinone oxidoreductase subunit C (202 aa).

It belongs to the complex I 30 kDa subunit family. As to quaternary structure, NDH-1 is composed of 14 different subunits. Subunits NuoB, C, D, E, F, and G constitute the peripheral sector of the complex.

It localises to the cell inner membrane. The enzyme catalyses a quinone + NADH + 5 H(+)(in) = a quinol + NAD(+) + 4 H(+)(out). NDH-1 shuttles electrons from NADH, via FMN and iron-sulfur (Fe-S) centers, to quinones in the respiratory chain. The immediate electron acceptor for the enzyme in this species is believed to be ubiquinone. Couples the redox reaction to proton translocation (for every two electrons transferred, four hydrogen ions are translocated across the cytoplasmic membrane), and thus conserves the redox energy in a proton gradient. In Bartonella quintana (strain Toulouse) (Rochalimaea quintana), this protein is NADH-quinone oxidoreductase subunit C.